The primary structure comprises 968 residues: RNA polymerase-associated protein RapA (968 aa).

The 171-residue stretch at 164-334 (DVGRRHAPRV…FARLRLLDPN (171 aa)) folds into the Helicase ATP-binding domain. Position 177 to 184 (177 to 184 (DEVGLGKT)) interacts with ATP. Positions 280-283 (DEAH) match the DEAH box motif. The region spanning 490–662 (RVEWLMGYLT…YLASPVQTEG (173 aa)) is the Helicase C-terminal domain.

The protein belongs to the SNF2/RAD54 helicase family. RapA subfamily. Interacts with the RNAP. Has a higher affinity for the core RNAP than for the holoenzyme. Its ATPase activity is stimulated by binding to RNAP.

Transcription regulator that activates transcription by stimulating RNA polymerase (RNAP) recycling in case of stress conditions such as supercoiled DNA or high salt concentrations. Probably acts by releasing the RNAP, when it is trapped or immobilized on tightly supercoiled DNA. Does not activate transcription on linear DNA. Probably not involved in DNA repair. This Shigella sonnei (strain Ss046) protein is RNA polymerase-associated protein RapA.